The following is a 38-amino-acid chain: Photosystem II reaction center protein L (38 aa).

Residues 17 to 37 (SLYWGLLLMFVLAVLFSSYFF) traverse the membrane as a helical segment.

Belongs to the PsbL family. As to quaternary structure, PSII is composed of 1 copy each of membrane proteins PsbA, PsbB, PsbC, PsbD, PsbE, PsbF, PsbH, PsbI, PsbJ, PsbK, PsbL, PsbM, PsbT, PsbX, PsbY, PsbZ, Psb30/Ycf12, at least 3 peripheral proteins of the oxygen-evolving complex and a large number of cofactors. It forms dimeric complexes.

It is found in the plastid. It localises to the chloroplast thylakoid membrane. In terms of biological role, one of the components of the core complex of photosystem II (PSII). PSII is a light-driven water:plastoquinone oxidoreductase that uses light energy to abstract electrons from H(2)O, generating O(2) and a proton gradient subsequently used for ATP formation. It consists of a core antenna complex that captures photons, and an electron transfer chain that converts photonic excitation into a charge separation. This subunit is found at the monomer-monomer interface and is required for correct PSII assembly and/or dimerization. This Emiliania huxleyi (Coccolithophore) protein is Photosystem II reaction center protein L.